The sequence spans 279 residues: Nucleotide-binding protein THA_1518 (279 aa).

An ATP-binding site is contributed by 9–16; it reads GLSGAGKS. 57–60 contributes to the GTP binding site; it reads DARS.

Belongs to the RapZ-like family.

Displays ATPase and GTPase activities. The chain is Nucleotide-binding protein THA_1518 from Thermosipho africanus (strain TCF52B).